The primary structure comprises 64 residues: Probable tautomerase lp_1712 (64 aa).

Residue P2 is the Proton acceptor; via imino nitrogen of the active site.

This sequence belongs to the 4-oxalocrotonate tautomerase family.

This Lactiplantibacillus plantarum (strain ATCC BAA-793 / NCIMB 8826 / WCFS1) (Lactobacillus plantarum) protein is Probable tautomerase lp_1712.